We begin with the raw amino-acid sequence, 339 residues long: Lipoate-protein ligase A (339 aa).

The BPL/LPL catalytic domain occupies 28–211 (NPDSHTLFLW…AFREYYRDTD (184 aa)). ATP is bound by residues Arg70, 75-78 (GAVF), and Lys129. Lys129 contacts (R)-lipoate.

It belongs to the LplA family. Monomer.

Its subcellular location is the cytoplasm. The enzyme catalyses L-lysyl-[lipoyl-carrier protein] + (R)-lipoate + ATP = N(6)-[(R)-lipoyl]-L-lysyl-[lipoyl-carrier protein] + AMP + diphosphate + H(+). It participates in protein modification; protein lipoylation via exogenous pathway; protein N(6)-(lipoyl)lysine from lipoate: step 1/2. Its pathway is protein modification; protein lipoylation via exogenous pathway; protein N(6)-(lipoyl)lysine from lipoate: step 2/2. Catalyzes both the ATP-dependent activation of exogenously supplied lipoate to lipoyl-AMP and the transfer of the activated lipoyl onto the lipoyl domains of lipoate-dependent enzymes. The sequence is that of Lipoate-protein ligase A from Psychrobacter cryohalolentis (strain ATCC BAA-1226 / DSM 17306 / VKM B-2378 / K5).